The chain runs to 361 residues: tRNA-specific 2-thiouridylase MnmA (361 aa).

ATP-binding positions include 6–13 and I32; that span reads LVSGGVDS. The tract at residues 93–95 is interaction with target base in tRNA; that stretch reads NPD. The active-site Nucleophile is C98. C98 and C193 are disulfide-bonded. Residue G121 coordinates ATP. An interaction with tRNA region spans residues 143-145; the sequence is KDQ. The Cysteine persulfide intermediate role is filled by C193.

Belongs to the MnmA/TRMU family.

It is found in the cytoplasm. The catalysed reaction is S-sulfanyl-L-cysteinyl-[protein] + uridine(34) in tRNA + AH2 + ATP = 2-thiouridine(34) in tRNA + L-cysteinyl-[protein] + A + AMP + diphosphate + H(+). In terms of biological role, catalyzes the 2-thiolation of uridine at the wobble position (U34) of tRNA, leading to the formation of s(2)U34. This Porphyromonas gingivalis (strain ATCC 33277 / DSM 20709 / CIP 103683 / JCM 12257 / NCTC 11834 / 2561) protein is tRNA-specific 2-thiouridylase MnmA.